The chain runs to 53 residues: U1-poneritoxin-Dq5a (53 aa).

Positions 1–23 (MNIRLMFTLIALLVLTVSFSGAN) are cleaved as a signal peptide. 3 cysteine pairs are disulfide-bonded: cysteine 25/cysteine 42, cysteine 32/cysteine 47, and cysteine 41/cysteine 52.

In terms of tissue distribution, expressed by the venom gland.

It localises to the secreted. Its function is as follows. May have neurotoxic activity. In Dinoponera quadriceps (South American ant), this protein is U1-poneritoxin-Dq5a.